A 156-amino-acid polypeptide reads, in one-letter code: Small ribosomal subunit protein uS7 (156 aa).

This sequence belongs to the universal ribosomal protein uS7 family. In terms of assembly, part of the 30S ribosomal subunit. Contacts proteins S9 and S11.

Its function is as follows. One of the primary rRNA binding proteins, it binds directly to 16S rRNA where it nucleates assembly of the head domain of the 30S subunit. Is located at the subunit interface close to the decoding center, probably blocks exit of the E-site tRNA. This is Small ribosomal subunit protein uS7 from Pectobacterium carotovorum subsp. carotovorum (strain PC1).